Reading from the N-terminus, the 383-residue chain is Decapping nuclease RAI1 (383 aa).

Position 166 (glutamate 166) interacts with a divalent metal cation. Glutamate 215 is a binding site for substrate. A divalent metal cation contacts are provided by aspartate 217, glutamate 235, and leucine 236. 2 residues coordinate substrate: lysine 237 and glutamine 261.

Belongs to the DXO/Dom3Z family. Interacts with RAT1; the interaction is direct, stabilizes RAT1 protein structure and stimulates its exoribonuclease activity. The interaction also stimulates RAI1 pyrophosphohydrolase activity, probably by recruiting it to mRNA substrates. A divalent metal cation is required as a cofactor.

The protein localises to the nucleus. It carries out the reaction a 5'-end NAD(+)-phospho-ribonucleoside in mRNA + H2O = a 5'-end phospho-ribonucleoside in mRNA + NAD(+) + H(+). The enzyme catalyses a 5'-end (N(7)-methyl 5'-triphosphoguanosine)-ribonucleoside-ribonucleotide in mRNA + H2O = a (N(7)-methyl 5'-triphosphoguanosine)-nucleoside + a 5'-end phospho-ribonucleoside in mRNA + H(+). It catalyses the reaction a 5'-end triphospho-ribonucleoside in mRNA + H2O = a 5'-end phospho-ribonucleoside in mRNA + diphosphate + H(+). Functionally, decapping enzyme for NAD-capped RNAs: specifically hydrolyzes the nicotinamide adenine dinucleotide (NAD) cap from a subset of RNAs by removing the entire NAD moiety from the 5'-end of an NAD-capped RNA. The NAD-cap is present at the 5'-end of some RNAs and snoRNAs. In contrast to the canonical 5'-end N7 methylguanosine (m7G) cap, the NAD cap promotes mRNA decay. Also acts as a non-canonical decapping enzyme that removes the entire cap structure of m7G capped or incompletely capped RNAs. Has decapping activity toward incomplete 5'-end m7G cap mRNAs such as unmethylated 5'-end-capped RNA (cap0), while it has no activity toward 2'-O-ribose methylated m7G cap (cap1). Also possesses RNA 5'-pyrophosphohydrolase activity by hydrolyzing the 5'-end triphosphate to release pyrophosphates. Stimulates exoribonuclease activity of Rat1, allowing it to degrade RNAs with stable secondary structure more effectively. The polypeptide is Decapping nuclease RAI1 (Lachancea thermotolerans (strain ATCC 56472 / CBS 6340 / NRRL Y-8284) (Yeast)).